The chain runs to 166 residues: Protein SprT (166 aa).

Positions Ala-21 to Phe-160 constitute a SprT-like domain. Residue His-74 coordinates Zn(2+). Glu-75 is an active-site residue. His-78 contacts Zn(2+).

It belongs to the SprT family. Requires Zn(2+) as cofactor.

The protein localises to the cytoplasm. The protein is Protein SprT of Vibrio atlanticus (strain LGP32) (Vibrio splendidus (strain Mel32)).